A 368-amino-acid polypeptide reads, in one-letter code: DNA replication and repair protein RecF (368 aa).

30–37 (GDNGAGKT) provides a ligand contact to ATP.

This sequence belongs to the RecF family.

It is found in the cytoplasm. In terms of biological role, the RecF protein is involved in DNA metabolism; it is required for DNA replication and normal SOS inducibility. RecF binds preferentially to single-stranded, linear DNA. It also seems to bind ATP. In Xanthomonas euvesicatoria pv. vesicatoria (strain 85-10) (Xanthomonas campestris pv. vesicatoria), this protein is DNA replication and repair protein RecF.